The following is a 490-amino-acid chain: MEEADKRAEELRAQIAECEATLQSLKEQLAAAEAAKTPPYSDSTETDRGSSSSTWKWPLAEAEYERYGRQLILPSVGIQGQLRLKAASVLIVGAGGLGCPASAYFAGAGVGTIGLVDGDTVEASNLHRQVAHGTSRVGMLKVDSAISYLRELNPLVKYNAHQSHLTPENAESIVSGYDLVLDCTDHPTSRYLISDVCVLLRKPLVSASALRTDGQLIVLNTPAAPQADLSGGPCYRCVFPKPPPPDAVTSCGEGGILGPVVGVMGVLQALEGIRLLAAGRHLSPSPEQQQTAISPSLLLFSAPPDGSPAGFRSVRMRGRRKDCFACGEKSALSLATLREGGLDYVQFCGGSRKPVALLKSEERVSAEQLNALLQQQAGEHGKPVLLDVREREHFEIANIPGAINIPFSKTQNPGARHNAEDTPKLDWLPDGVADGHSPVYVVCRVGNDSQTVARQLKEFGLDNQGKRFIGDVKGGMLAWKREVDSTLPFM.

Residues 33–54 are disordered; that stretch reads EAAKTPPYSDSTETDRGSSSST. ATP is bound by residues G96, D117, 124–128, K141, and 185–186; these read SNLHR and DH. Residues C234 and C237 each coordinate Zn(2+). The Glycyl thioester intermediate; for adenylyltransferase activity role is filled by C251. Residues C323 and C326 each contribute to the Zn(2+) site. The Rhodanese domain occupies 379-488; that stretch reads EHGKPVLLDV…WKREVDSTLP (110 aa). C443 (cysteine persulfide intermediate; for sulfurtransferase activity) is an active-site residue.

The protein in the N-terminal section; belongs to the HesA/MoeB/ThiF family. UBA4 subfamily. It depends on Zn(2+) as a cofactor.

It localises to the cytoplasm. It is found in the cytosol. It catalyses the reaction [molybdopterin-synthase sulfur-carrier protein]-C-terminal Gly-Gly + ATP + H(+) = [molybdopterin-synthase sulfur-carrier protein]-C-terminal Gly-Gly-AMP + diphosphate. The catalysed reaction is [molybdopterin-synthase sulfur-carrier protein]-C-terminal Gly-Gly-AMP + S-sulfanyl-L-cysteinyl-[cysteine desulfurase] + AH2 = [molybdopterin-synthase sulfur-carrier protein]-C-terminal-Gly-aminoethanethioate + L-cysteinyl-[cysteine desulfurase] + A + AMP + 2 H(+). It functions in the pathway tRNA modification; 5-methoxycarbonylmethyl-2-thiouridine-tRNA biosynthesis. In terms of biological role, plays a central role in 2-thiolation of mcm(5)S(2)U at tRNA wobble positions of cytosolic tRNA(Lys), tRNA(Glu) and tRNA(Gln). Also essential during biosynthesis of the molybdenum cofactor. Acts by mediating the C-terminal thiocarboxylation of sulfur carriers URM1 and MOCS2A. Its N-terminus first activates urm1 and MOCS2A as acyl-adenylates (-COAMP), then the persulfide sulfur on the catalytic cysteine is transferred to URM1 and MOCS2A to form thiocarboxylation (-COSH) of their C-terminus. The reaction probably involves hydrogen sulfide that is generated from the persulfide intermediate and that acts as a nucleophile towards URM1 and MOCS2A. Subsequently, a transient disulfide bond is formed. Does not use thiosulfate as sulfur donor; NFS1 probably acting as a sulfur donor for thiocarboxylation reactions. The polypeptide is Adenylyltransferase and sulfurtransferase uba4 (Pyricularia oryzae (strain 70-15 / ATCC MYA-4617 / FGSC 8958) (Rice blast fungus)).